The sequence spans 482 residues: Probable polyamine transporter At1g31820 (482 aa).

Transmembrane regions (helical) follow at residues 36 to 56 (VSML…PFGA), 66 to 86 (LLAL…EALI), 94 to 114 (FPIN…FWGF), 143 to 163 (VPAL…TLLL), 171 to 191 (LTIV…PFAV), 254 to 274 (VIFV…AIPL), 294 to 314 (GWLQ…MFLA), 344 to 364 (TPLL…GLSF), 367 to 387 (IIAA…IAFV), 406 to 426 (TVGS…VIVL), and 429 to 449 (IKVA…KPCL).

Belongs to the amino acid-polyamine-organocation (APC) superfamily. Polyamine:cation symporter (PHS) (TC 2.A.3.12) family.

It is found in the cell membrane. Probable cell membrane polyamine/proton symporter involved in the polyamine uptake in cells. The chain is Probable polyamine transporter At1g31820 from Arabidopsis thaliana (Mouse-ear cress).